The chain runs to 286 residues: AB hydrolase superfamily protein YfhM (286 aa).

The AB hydrolase-1 domain occupies 27–272 (PLIVLLHGFP…ASHWINHEKP (246 aa)). Catalysis depends on aspartate 103, which acts as the Nucleophile. Tyrosine 210 (proton donor) is an active-site residue. Histidine 265 (proton acceptor) is an active-site residue.

The protein belongs to the AB hydrolase superfamily. Epoxide hydrolase family.

This is AB hydrolase superfamily protein YfhM (yfhM) from Bacillus subtilis (strain 168).